Consider the following 101-residue polypeptide: Small ribosomal subunit protein uS14 (101 aa).

A compositionally biased stretch (basic and acidic residues) spans 1–10; that stretch reads MAKKSSIEKN. The disordered stretch occupies residues 1–23; that stretch reads MAKKSSIEKNNRRRKMTKNAAPK. Residues 11 to 23 are compositionally biased toward basic residues; the sequence is NRRRKMTKNAAPK.

This sequence belongs to the universal ribosomal protein uS14 family. Part of the 30S ribosomal subunit. Contacts proteins S3 and S10.

In terms of biological role, binds 16S rRNA, required for the assembly of 30S particles and may also be responsible for determining the conformation of the 16S rRNA at the A site. In Rhodopseudomonas palustris (strain BisB5), this protein is Small ribosomal subunit protein uS14.